A 372-amino-acid chain; its full sequence is tRNA 2-selenouridine synthase (372 aa).

The region spanning 17–140 is the Rhodanese domain; sequence FLQDIPLIDV…LRNFLLTTLE (124 aa). Cys100 serves as the catalytic S-selanylcysteine intermediate.

This sequence belongs to the SelU family. In terms of assembly, monomer.

The enzyme catalyses 5-methylaminomethyl-2-thiouridine(34) in tRNA + selenophosphate + (2E)-geranyl diphosphate + H2O + H(+) = 5-methylaminomethyl-2-selenouridine(34) in tRNA + (2E)-thiogeraniol + phosphate + diphosphate. The catalysed reaction is 5-methylaminomethyl-2-thiouridine(34) in tRNA + (2E)-geranyl diphosphate = 5-methylaminomethyl-S-(2E)-geranyl-thiouridine(34) in tRNA + diphosphate. It carries out the reaction 5-methylaminomethyl-S-(2E)-geranyl-thiouridine(34) in tRNA + selenophosphate + H(+) = 5-methylaminomethyl-2-(Se-phospho)selenouridine(34) in tRNA + (2E)-thiogeraniol. It catalyses the reaction 5-methylaminomethyl-2-(Se-phospho)selenouridine(34) in tRNA + H2O = 5-methylaminomethyl-2-selenouridine(34) in tRNA + phosphate. Its function is as follows. Involved in the post-transcriptional modification of the uridine at the wobble position (U34) of tRNA(Lys), tRNA(Glu) and tRNA(Gln). Catalyzes the conversion of 2-thiouridine (S2U-RNA) to 2-selenouridine (Se2U-RNA). Acts in a two-step process involving geranylation of 2-thiouridine (S2U) to S-geranyl-2-thiouridine (geS2U) and subsequent selenation of the latter derivative to 2-selenouridine (Se2U) in the tRNA chain. The sequence is that of tRNA 2-selenouridine synthase from Serratia proteamaculans (strain 568).